The sequence spans 112 residues: Small ribosomal subunit protein bS6 (112 aa).

Belongs to the bacterial ribosomal protein bS6 family.

Functionally, binds together with bS18 to 16S ribosomal RNA. The protein is Small ribosomal subunit protein bS6 of Chlamydia felis (strain Fe/C-56) (Chlamydophila felis).